A 197-amino-acid polypeptide reads, in one-letter code: uncharacterized protein (197 aa).

The chain crosses the membrane as a helical span at residues 11-31; it reads ICGFSLVALTIAGIVGGVYLV.

It is found in the membrane. This is an uncharacterized protein from Mycoplasma pneumoniae (strain ATCC 29342 / M129 / Subtype 1) (Mycoplasmoides pneumoniae).